Consider the following 395-residue polypeptide: Acetylornithine aminotransferase (395 aa).

Pyridoxal 5'-phosphate contacts are provided by residues 117–118 (GA) and F144. R147 serves as a coordination point for N(2)-acetyl-L-ornithine. 230–233 (DEVQ) contributes to the pyridoxal 5'-phosphate binding site. K259 carries the N6-(pyridoxal phosphate)lysine modification. Position 285 (S285) interacts with N(2)-acetyl-L-ornithine. T286 is a pyridoxal 5'-phosphate binding site.

It belongs to the class-III pyridoxal-phosphate-dependent aminotransferase family. ArgD subfamily. As to quaternary structure, homodimer. The cofactor is pyridoxal 5'-phosphate.

It localises to the cytoplasm. The catalysed reaction is N(2)-acetyl-L-ornithine + 2-oxoglutarate = N-acetyl-L-glutamate 5-semialdehyde + L-glutamate. It participates in amino-acid biosynthesis; L-arginine biosynthesis; N(2)-acetyl-L-ornithine from L-glutamate: step 4/4. The chain is Acetylornithine aminotransferase from Methanosarcina acetivorans (strain ATCC 35395 / DSM 2834 / JCM 12185 / C2A).